We begin with the raw amino-acid sequence, 276 residues long: Formamidopyrimidine-DNA glycosylase (276 aa).

Pro-2 (schiff-base intermediate with DNA) is an active-site residue. Glu-3 acts as the Proton donor in catalysis. The active-site Proton donor; for beta-elimination activity is the Lys-58. Positions 92, 111, and 154 each coordinate DNA. Residues 239–273 (QVYGHAGEECSSCGTILEKIKVNGRGTTFCPHCQV) form an FPG-type zinc finger. Arg-263 serves as the catalytic Proton donor; for delta-elimination activity.

It belongs to the FPG family. In terms of assembly, monomer. Zn(2+) serves as cofactor.

The catalysed reaction is Hydrolysis of DNA containing ring-opened 7-methylguanine residues, releasing 2,6-diamino-4-hydroxy-5-(N-methyl)formamidopyrimidine.. The enzyme catalyses 2'-deoxyribonucleotide-(2'-deoxyribose 5'-phosphate)-2'-deoxyribonucleotide-DNA = a 3'-end 2'-deoxyribonucleotide-(2,3-dehydro-2,3-deoxyribose 5'-phosphate)-DNA + a 5'-end 5'-phospho-2'-deoxyribonucleoside-DNA + H(+). Functionally, involved in base excision repair of DNA damaged by oxidation or by mutagenic agents. Acts as a DNA glycosylase that recognizes and removes damaged bases. Has a preference for oxidized purines, such as 7,8-dihydro-8-oxoguanine (8-oxoG). Has AP (apurinic/apyrimidinic) lyase activity and introduces nicks in the DNA strand. Cleaves the DNA backbone by beta-delta elimination to generate a single-strand break at the site of the removed base with both 3'- and 5'-phosphates. In Lactobacillus gasseri (strain ATCC 33323 / DSM 20243 / BCRC 14619 / CIP 102991 / JCM 1131 / KCTC 3163 / NCIMB 11718 / NCTC 13722 / AM63), this protein is Formamidopyrimidine-DNA glycosylase.